Here is a 285-residue protein sequence, read N- to C-terminus: MSRYTLAIVGCGVMGQALLSAIYNAPKASDEALQYYPSKIIACNDVPASAELVEKLVSGFETSPNGIEVEIATNDNERAVAEAKVIILGLKPHIVEPVLQQIPNEDGSKLLISLAAGVTLNQLSQYYKKVSRVMTNTPAKYGYGTAIVSHSTSVEPQDKAIVSELVSQVGKCLELPEKNMDAATALVGSGPAFVLLMLESMMEAGLKMGIPLKESRECAMKVLEGTAKMVEISGQSPGVLKHQVCTPGGTTIAGLCVMEDKGVKSGIIRGIEEAARVSKELGQKK.

Belongs to the pyrroline-5-carboxylate reductase family. In terms of assembly, homotetramer.

It carries out the reaction L-proline + NADP(+) = (S)-1-pyrroline-5-carboxylate + NADPH + 2 H(+). The enzyme catalyses L-proline + NAD(+) = (S)-1-pyrroline-5-carboxylate + NADH + 2 H(+). The protein operates within amino-acid biosynthesis; L-proline biosynthesis; L-proline from L-glutamate 5-semialdehyde: step 1/1. The sequence is that of Pyrroline-5-carboxylate reductase from Kluyveromyces lactis (strain ATCC 8585 / CBS 2359 / DSM 70799 / NBRC 1267 / NRRL Y-1140 / WM37) (Yeast).